Reading from the N-terminus, the 223-residue chain is Sigma non-opioid intracellular receptor 1 (223 aa).

The Lumenal portion of the chain corresponds to 1–9 (MQWAVGRRW). A targeting to endoplasmic reticulum-associated lipid droplets region spans residues 2 to 8 (QWAVGRR). The helical transmembrane segment at 10 to 30 (LWVALFLAAVAVLTQIVWLWL) threads the bilayer. The Cytoplasmic segment spans residues 31 to 223 (GTQNFVFQRE…LTTYLFGQDP (193 aa)). An important for ligand-binding region spans residues 99-106 (SLSEYVLL). Residues 177–223 (VIPSTLGFALADTVFSTQDFLTLFYTLRVYARALQLELTTYLFGQDP) are C-terminal hydrophobic region.

Belongs to the ERG2 family. In terms of assembly, homotrimer. Forms a ternary complex with ANK2 and ITPR3. The complex is disrupted by agonists. Interacts with KCNA4. Interacts with KCNA2; cocaine consumption leads to increased interaction. Interacts with RNF112 in an oxidative stress-regulated manner. Ubiquitously expressed with higher expression in liver, kidney and steroid-producing tissues such as placenta, ovary and adrenal gland.

Its subcellular location is the nucleus inner membrane. It is found in the nucleus outer membrane. The protein resides in the nucleus envelope. The protein localises to the cytoplasmic vesicle. It localises to the endoplasmic reticulum membrane. Its subcellular location is the membrane. It is found in the lipid droplet. The protein resides in the cell junction. The protein localises to the cell membrane. It localises to the cell projection. Its subcellular location is the growth cone. It is found in the postsynaptic density membrane. Functionally, functions in lipid transport from the endoplasmic reticulum and is involved in a wide array of cellular functions probably through regulation of the biogenesis of lipid microdomains at the plasma membrane. Involved in the regulation of different receptors it plays a role in BDNF signaling and EGF signaling. Also regulates ion channels like the potassium channel and could modulate neurotransmitter release. Plays a role in calcium signaling through modulation together with ANK2 of the ITP3R-dependent calcium efflux at the endoplasmic reticulum. Plays a role in several other cell functions including proliferation, survival and death. Originally identified for its ability to bind various psychoactive drugs it is involved in learning processes, memory and mood alteration. Necessary for proper mitochondrial axonal transport in motor neurons, in particular the retrograde movement of mitochondria. Plays a role in protecting cells against oxidative stress-induced cell death via its interaction with RNF112. This Cavia porcellus (Guinea pig) protein is Sigma non-opioid intracellular receptor 1 (SIGMAR1).